A 212-amino-acid chain; its full sequence is Nascent polypeptide-associated complex subunit alpha (212 aa).

2 disordered regions span residues 1–54 (MSNP…SRNE) and 123–177 (QLAA…EDKD). Residues 22-38 (AEDEGSDSSDSEAEGEE) are compositionally biased toward acidic residues. The NAC-A/B domain maps to 51–116 (SRNEKKARKS…AKIEDLNSQA (66 aa)). The span at 128–157 (ESHDHAGHDHSGHDHSHDHGKGKAVDTEEK) shows a compositional bias: basic and acidic residues. Positions 158–169 (KEEEEDDTEEVD) are enriched in acidic residues. A UBA domain is found at 173 to 212 (LEDKDIELVMTQASVSRNKAVKALKENDNDIVNSIMALSI).

It belongs to the NAC-alpha family. Part of the nascent polypeptide-associated complex (NAC), consisting of EGD2 and EGD1. NAC associates with ribosomes via EGD1.

Its subcellular location is the cytoplasm. The protein localises to the nucleus. Component of the nascent polypeptide-associated complex (NAC), a dynamic component of the ribosomal exit tunnel, protecting the emerging polypeptides from interaction with other cytoplasmic proteins to ensure appropriate nascent protein targeting. The NAC complex also promotes mitochondrial protein import by enhancing productive ribosome interactions with the outer mitochondrial membrane and blocks the inappropriate interaction of ribosomes translating non-secretory nascent polypeptides with translocation sites in the membrane of the endoplasmic reticulum. EGD2 may also be involved in transcription regulation. This Botryotinia fuckeliana (strain B05.10) (Noble rot fungus) protein is Nascent polypeptide-associated complex subunit alpha (egd2).